Reading from the N-terminus, the 271-residue chain is 4-hydroxy-tetrahydrodipicolinate reductase (271 aa).

Residues 10–15, Glu36, 100–102, and 124–127 each bind NAD(+); these read GAGGRM, GTT, and SGNM. His157 functions as the Proton donor/acceptor in the catalytic mechanism. His158 contributes to the (S)-2,3,4,5-tetrahydrodipicolinate binding site. Catalysis depends on Lys161, which acts as the Proton donor. 167 to 168 contributes to the (S)-2,3,4,5-tetrahydrodipicolinate binding site; sequence GT.

It belongs to the DapB family.

The protein resides in the cytoplasm. It catalyses the reaction (S)-2,3,4,5-tetrahydrodipicolinate + NAD(+) + H2O = (2S,4S)-4-hydroxy-2,3,4,5-tetrahydrodipicolinate + NADH + H(+). It carries out the reaction (S)-2,3,4,5-tetrahydrodipicolinate + NADP(+) + H2O = (2S,4S)-4-hydroxy-2,3,4,5-tetrahydrodipicolinate + NADPH + H(+). The protein operates within amino-acid biosynthesis; L-lysine biosynthesis via DAP pathway; (S)-tetrahydrodipicolinate from L-aspartate: step 4/4. Catalyzes the conversion of 4-hydroxy-tetrahydrodipicolinate (HTPA) to tetrahydrodipicolinate. This is 4-hydroxy-tetrahydrodipicolinate reductase from Rhodopseudomonas palustris (strain HaA2).